Reading from the N-terminus, the 232-residue chain is MGILKSLFTLGKSFISQAEESIEETQGVRMLEQHIRDAKAELDKAGKSRVDLLARVKLSHDKLKDLRERKASLEARALEALSKNVNPSLINEVAEEIARLENLITAEEQVLSNLEVSRDGVEKAVTATAQRIAQFEQQMEVVKATEAMQRAQQAVTTSTVGASSSVSTAAESLKRLQTRQAERQARLDAAAQLEKVADGRDLDEKLAEAGIGGSNKSSAQDVLARLQRQQGE.

Residues 1–18 form the signal peptide; that stretch reads MGILKSLFTLGKSFISQA. The interval 207 to 232 is disordered; sequence AEAGIGGSNKSSAQDVLARLQRQQGE.

It belongs to the PspA/Vipp/IM30 family.

This is an uncharacterized protein from Escherichia coli O6:H1 (strain CFT073 / ATCC 700928 / UPEC).